The sequence spans 211 residues: Thymidylate kinase (211 aa).

G7–T14 is an ATP binding site.

This sequence belongs to the thymidylate kinase family.

The catalysed reaction is dTMP + ATP = dTDP + ADP. Functionally, phosphorylation of dTMP to form dTDP in both de novo and salvage pathways of dTTP synthesis. This Mesoplasma florum (strain ATCC 33453 / NBRC 100688 / NCTC 11704 / L1) (Acholeplasma florum) protein is Thymidylate kinase.